Here is a 106-residue protein sequence, read N- to C-terminus: Nucleoid-associated protein Noc_2594 (106 aa).

Disordered stretches follow at residues 1–20 and 85–106; these read MKGGLGNLMKQAQQLQSNME and QSKEKMSSMTSGMLPPGFKLPL. Residues 10–20 are compositionally biased toward polar residues; sequence KQAQQLQSNME.

This sequence belongs to the YbaB/EbfC family. Homodimer.

Its subcellular location is the cytoplasm. The protein localises to the nucleoid. Its function is as follows. Binds to DNA and alters its conformation. May be involved in regulation of gene expression, nucleoid organization and DNA protection. The chain is Nucleoid-associated protein Noc_2594 from Nitrosococcus oceani (strain ATCC 19707 / BCRC 17464 / JCM 30415 / NCIMB 11848 / C-107).